The sequence spans 91 residues: Small ribosomal subunit protein uS19 (91 aa).

The protein belongs to the universal ribosomal protein uS19 family.

Functionally, protein S19 forms a complex with S13 that binds strongly to the 16S ribosomal RNA. In Azotobacter vinelandii (strain DJ / ATCC BAA-1303), this protein is Small ribosomal subunit protein uS19.